The chain runs to 336 residues: Galactinol synthase 6 (336 aa).

Lysine 106 is a catalytic residue. The Mn(2+) site is built by aspartate 122, aspartate 124, and histidine 260.

This sequence belongs to the glycosyltransferase 8 family. Galactosyltransferase subfamily. A divalent metal cation is required as a cofactor.

The protein resides in the cytoplasm. The catalysed reaction is myo-inositol + UDP-alpha-D-galactose = alpha-D-galactosyl-(1-&gt;3)-1D-myo-inositol + UDP + H(+). Its function is as follows. Galactinol synthase involved in the biosynthesis of raffinose family oligosaccharides (RFOs) that function as osmoprotectants. May promote plant stress tolerance. The protein is Galactinol synthase 6 (GOLS6) of Arabidopsis thaliana (Mouse-ear cress).